Consider the following 283-residue polypeptide: Phosphatidylglycerol--prolipoprotein diacylglyceryl transferase (283 aa).

Transmembrane regions (helical) follow at residues L21–A41, L60–Y80, V95–W115, F124–L144, S176–I196, G203–V223, and M239–F259. Residue R143 participates in a 1,2-diacyl-sn-glycero-3-phospho-(1'-sn-glycerol) binding.

It belongs to the Lgt family.

The protein resides in the cell inner membrane. It carries out the reaction L-cysteinyl-[prolipoprotein] + a 1,2-diacyl-sn-glycero-3-phospho-(1'-sn-glycerol) = an S-1,2-diacyl-sn-glyceryl-L-cysteinyl-[prolipoprotein] + sn-glycerol 1-phosphate + H(+). The protein operates within protein modification; lipoprotein biosynthesis (diacylglyceryl transfer). Its function is as follows. Catalyzes the transfer of the diacylglyceryl group from phosphatidylglycerol to the sulfhydryl group of the N-terminal cysteine of a prolipoprotein, the first step in the formation of mature lipoproteins. This chain is Phosphatidylglycerol--prolipoprotein diacylglyceryl transferase, found in Aliivibrio salmonicida (strain LFI1238) (Vibrio salmonicida (strain LFI1238)).